A 188-amino-acid polypeptide reads, in one-letter code: MPKASDIKKGSAIEHNGKVFFVKEISKLTPSGRAGATLFRMRMYDVATGSKADESFKADDMINLADFSRRSATFSYVDGNEYVFMDSEDYTPYNFNKEAIEEELLFITEETQGLQILIVDGAPVAIELPSAVDLEIVETAPSIKGASASARTKPATMTTGLTVQVPEYIANGEKVKINTTEHKFMSRA.

It belongs to the elongation factor P family.

The chain is Elongation factor P-like protein from Aliivibrio fischeri (strain MJ11) (Vibrio fischeri).